Reading from the N-terminus, the 139-residue chain is D-ribose pyranase (139 aa).

The Proton donor role is filled by His-20. Substrate contacts are provided by residues Asp-28, His-106, and 128–130 (YAN).

The protein belongs to the RbsD / FucU family. RbsD subfamily. In terms of assembly, homodecamer.

It is found in the cytoplasm. It carries out the reaction beta-D-ribopyranose = beta-D-ribofuranose. It participates in carbohydrate metabolism; D-ribose degradation; D-ribose 5-phosphate from beta-D-ribopyranose: step 1/2. Functionally, catalyzes the interconversion of beta-pyran and beta-furan forms of D-ribose. This chain is D-ribose pyranase, found in Aliivibrio salmonicida (strain LFI1238) (Vibrio salmonicida (strain LFI1238)).